We begin with the raw amino-acid sequence, 199 residues long: Peptidyl-tRNA hydrolase (199 aa).

Residue Tyr15 participates in tRNA binding. His20 (proton acceptor) is an active-site residue. 3 residues coordinate tRNA: Tyr66, Asn68, and Asn114.

It belongs to the PTH family. Monomer.

Its subcellular location is the cytoplasm. It catalyses the reaction an N-acyl-L-alpha-aminoacyl-tRNA + H2O = an N-acyl-L-amino acid + a tRNA + H(+). Hydrolyzes ribosome-free peptidyl-tRNAs (with 1 or more amino acids incorporated), which drop off the ribosome during protein synthesis, or as a result of ribosome stalling. Functionally, catalyzes the release of premature peptidyl moieties from peptidyl-tRNA molecules trapped in stalled 50S ribosomal subunits, and thus maintains levels of free tRNAs and 50S ribosomes. The sequence is that of Peptidyl-tRNA hydrolase from Burkholderia cenocepacia (strain ATCC BAA-245 / DSM 16553 / LMG 16656 / NCTC 13227 / J2315 / CF5610) (Burkholderia cepacia (strain J2315)).